The chain runs to 336 residues: MPITIGNGFLKSEILTNSPRNTKEAWWKVLWEKIKDFFFSTGKAKADRCLHEMLFAERAPTRERLTEIFFELKELACASQRDRFQVHNPHENDATIILRIMDQNEENELLRITQNTDTFSCEVMGNLYFLMKDRPDILKSHPQMTAMIKRRYSEIVDYPLPSTLCLNPAGAPILSVPLDNIEGYLYTELRKGHLDGWKAQEKATYLAAKIQSGIEKTTRILHHANISESTQQNAFLETMAMCGLKQLEIPPPHTHIPIEKMVKEVLLADKTFQAFLVTDPSTSQSMLAEIVEAISDQVFHAIFRIDPQAIQKMAEEQLTTLHVRSEQQSGCLCCFL.

An interaction with host PLEKHM2 region spans residues 1-330 (MPITIGNGFL…LHVRSEQQSG (330 aa)).

It belongs to the Sif family. In terms of assembly, interacts with host PLEKHM2. Interacts with SseJ; the interaction is indirect.

Its subcellular location is the secreted. The protein resides in the host cytoplasm. It localises to the host cell membrane. Its function is as follows. Effector proteins function to alter host cell physiology and promote bacterial survival in host tissues. This protein is required for endosomal tubulation and formation of Salmonella-induced filaments (Sifs), which are filamentous structures containing lysosomal membrane glycoproteins within epithelial cells. Sif formation is concomitant with intracellular bacterial replication. The sequence is that of Secreted effector protein SifA (sifA) from Salmonella typhimurium (strain LT2 / SGSC1412 / ATCC 700720).